A 985-amino-acid chain; its full sequence is UPF0182 protein Cgl0786/cg0896 (985 aa).

7 consecutive transmembrane segments (helical) span residues 19-39 (VTWI…SVGF), 63-83 (IVLF…AGYF), 115-135 (VMVI…QRSW), 176-196 (SMML…MGGI), 215-235 (TQLA…YWLD), 262-282 (KIIL…AIFL), and 290-310 (LAVV…PLML). The segment at 904-944 (KEAQDIEEVDGTATTPSTDETDTDTDQPATETPTAPVSEAE) is disordered. Positions 929–939 (DQPATETPTAP) are enriched in low complexity.

This sequence belongs to the UPF0182 family.

The protein resides in the cell membrane. This Corynebacterium glutamicum (strain ATCC 13032 / DSM 20300 / JCM 1318 / BCRC 11384 / CCUG 27702 / LMG 3730 / NBRC 12168 / NCIMB 10025 / NRRL B-2784 / 534) protein is UPF0182 protein Cgl0786/cg0896.